Reading from the N-terminus, the 608-residue chain is MATNLLCLSNKLSSPTPTPSTRFPQSKNFITQKTSLANPKPWRVICATSSQFTQITEHNSRRSANYQPNLWNFEFLQSLENDLKVEKLEEKATKLEEEVRCMINRVDTQPLSLLELIDDVQRLGLTYKFEKDIIKALENIVLLDENKKNKSDLHATALSFRLLRQHGFEVSQDVFERFKDKEGGFSGELKGDVQGLLSLYEASYLGFEGENLLEEARTFSITHLKNNLKEGINTKVAEQVSHALELPYHQRLHRLEARWFLDKYEPKEPHHQLLLELAKLDFNMVQTLHQKELQDLSRWWTEMGLASKLDFVRDRLMEVYFWALGMAPDPQFGECRKAVTKMFGLVTIIDDVYDVYGTLDELQLFTDAVERWDVNAINTLPDYMKLCFLALYNTVNDTSYSILKEKGHNNLSYLTKSWRELCKAFLQEAKWSNNKIIPAFSKYLENASVSSSGVALLAPSYFSVCQQQEDISDHALRSLTDFHGLVRSSCVIFRLCNDLATSAAELERGETTNSIISYMHENDGTSEEQAREELRKLIDAEWKKMNRERVSDSTLLPKAFMEIAVNMARVSHCTYQYGDGLGRPDYATENRIKLLLIDPFPINQLMYV.

Residues 1–45 (MATNLLCLSNKLSSPTPTPSTRFPQSKNFITQKTSLANPKPWRVI) constitute a chloroplast transit peptide. Aspartate 350 is a binding site for dimethylallyl diphosphate. The Mg(2+) site is built by aspartate 350 and aspartate 354. The DDXXD motif signature appears at 350 to 354 (DDVYD). Residues glutamate 428, arginine 494, and asparagine 497 each coordinate dimethylallyl diphosphate. Asparagine 497, threonine 501, and glutamate 505 together coordinate Mg(2+).

The protein belongs to the terpene synthase family. Tpsb subfamily. Requires Mg(2+) as cofactor. Mn(2+) is required as a cofactor.

It localises to the plastid. The protein localises to the chloroplast. It catalyses the reaction dimethylallyl diphosphate = isoprene + diphosphate. Lyase that catalyzes the formation of isoprene from dimethylallyl diphosphate. The protein is Isoprene synthase, chloroplastic (ISPS) of Pueraria montana var. lobata (Kudzu vine).